Consider the following 268-residue polypeptide: NADPH-dependent 7-cyano-7-deazaguanine reductase (268 aa).

79–81 contacts substrate; that stretch reads VES. Residue 81–82 coordinates NADPH; it reads SK. Residue C176 is the Thioimide intermediate of the active site. D183 functions as the Proton donor in the catalytic mechanism. 215-216 contributes to the substrate binding site; that stretch reads HE. Position 244–245 (244–245) interacts with NADPH; the sequence is RG.

It belongs to the GTP cyclohydrolase I family. QueF type 2 subfamily. In terms of assembly, homodimer.

The protein resides in the cytoplasm. The enzyme catalyses 7-aminomethyl-7-carbaguanine + 2 NADP(+) = 7-cyano-7-deazaguanine + 2 NADPH + 3 H(+). It functions in the pathway tRNA modification; tRNA-queuosine biosynthesis. Functionally, catalyzes the NADPH-dependent reduction of 7-cyano-7-deazaguanine (preQ0) to 7-aminomethyl-7-deazaguanine (preQ1). This Saccharophagus degradans (strain 2-40 / ATCC 43961 / DSM 17024) protein is NADPH-dependent 7-cyano-7-deazaguanine reductase.